A 425-amino-acid polypeptide reads, in one-letter code: Serine--tRNA ligase (425 aa).

230–232 (TAE) is an L-serine binding site. An ATP-binding site is contributed by 261–263 (RQE). An L-serine-binding site is contributed by E284. 348-351 (EISS) serves as a coordination point for ATP. An L-serine-binding site is contributed by S384.

Belongs to the class-II aminoacyl-tRNA synthetase family. Type-1 seryl-tRNA synthetase subfamily. As to quaternary structure, homodimer. The tRNA molecule binds across the dimer.

It is found in the cytoplasm. The enzyme catalyses tRNA(Ser) + L-serine + ATP = L-seryl-tRNA(Ser) + AMP + diphosphate + H(+). It carries out the reaction tRNA(Sec) + L-serine + ATP = L-seryl-tRNA(Sec) + AMP + diphosphate + H(+). The protein operates within aminoacyl-tRNA biosynthesis; selenocysteinyl-tRNA(Sec) biosynthesis; L-seryl-tRNA(Sec) from L-serine and tRNA(Sec): step 1/1. In terms of biological role, catalyzes the attachment of serine to tRNA(Ser). Is also able to aminoacylate tRNA(Sec) with serine, to form the misacylated tRNA L-seryl-tRNA(Sec), which will be further converted into selenocysteinyl-tRNA(Sec). This chain is Serine--tRNA ligase, found in Caldanaerobacter subterraneus subsp. tengcongensis (strain DSM 15242 / JCM 11007 / NBRC 100824 / MB4) (Thermoanaerobacter tengcongensis).